A 387-amino-acid polypeptide reads, in one-letter code: Guanylate kinase 1 (387 aa).

Residues 137–319 form the Guanylate kinase-like domain; sequence EKPIVISGPS…CYKKLKNLLG (183 aa). 144–151 lines the ATP pocket; it reads GPSGVGKG. Active-site residues include Arg-177, Arg-270, and Arg-281. The ATP site is built by Asn-304 and Asp-305.

The protein belongs to the guanylate kinase family. Monomer.

It catalyses the reaction GMP + ATP = GDP + ADP. Essential for recycling GMP and indirectly, cGMP. Required for normal development of the gametophyte and embryo, in association with GK2. The chain is Guanylate kinase 1 (GK-1) from Arabidopsis thaliana (Mouse-ear cress).